We begin with the raw amino-acid sequence, 447 residues long: Replication-associated recombination protein A (447 aa).

57–64 is a binding site for ATP; sequence GPPGTGKT.

It belongs to the AAA ATPase family. RarA/MGS1/WRNIP1 subfamily.

Its function is as follows. DNA-dependent ATPase that plays important roles in cellular responses to stalled DNA replication processes. The chain is Replication-associated recombination protein A (rarA) from Escherichia coli O157:H7.